The following is a 419-amino-acid chain: Hydrolase LUC6 (419 aa).

S238 is a catalytic residue.

Belongs to the AB hydrolase superfamily. FUS2 hydrolase family.

Its pathway is mycotoxin biosynthesis. In terms of biological role, hydrolase; part of the gene cluster that mediates the biosynthesis of the mycotoxin lucilactaene and the lucilactaene-related compound NG-391 that act as cell cycle inhibitors with potent growth inhibitory activity against malarial parasites, moderate growth inhibitory activity against cancer cells, and no activity against bacteria and fungi. Within the pathway, LUC6 may catalyze the 2-pyrrolidone ring formation to form prelucilactaene C from prelucilactaene B, followed by C-15 hydroxylation by the same enzyme to give prelucilactaene D, epoxydation to yield prelucilactaene E, and finally cyclization to yield prelucilactaene F. The pathway begins with the hybrid PKS-NRPS synthetase LUC5 which is responsible for the condensation of one acetyl-coenzyme A (CoA) unit with six malonyl-CoA units and the amide linkage of the arising heptaketide and homoserine, subsequently releasing the first intermediate prelucilactaene B. Both the cytochrome P450 monooxygenase LUC2 and the hydrolase LUC6 function in parallel in modification of prelucilactaene B. LUC6 may catalyze the 2-pyrrolidone ring formation to form prelucilactaene C from prelucilactaene B, followed by C-15 hydroxylation by the same enzyme to give prelucilactaene D, which is then converted to prelucilactaene E by epoxidation, and finally to prelucilactaene F by cyclization. Prelucilactane D, prelucilactaene E, and prelucilactaene F can be converted to dihydrolucilactaene, NG391, and lucilactaene, respectively, via C-20 methyl group hydroxylation by the cytochrome P450 monooxygenase LUC2. However, LUC2, unlike FUS8 in fusarin C biosynthesis, is not enough for the full oxidation of the C-20 methyl group into carboxylic acid, which is a prerequisite for the final methylation step. The aldehyde dehydrogenase LUC3 is involved in the biosynthesis by further oxidation of the C-20 alcoholic analog prelucilactaene G into a carboxylic derivative. This unidentified carboxylic derivative may be converted to demethyllucilactaene. As the last step, the methyltransferase LUC1 methylates the hydroxyl group at C-21 of demethyllucilactaene to generate lucilactaene. The polypeptide is Hydrolase LUC6 (Fusarium sp).